The chain runs to 2202 residues: Activating signal cointegrator 1 complex subunit 3 (2202 aa).

A required for interaction with ASCC2 region spans residues Met1 to Ile400. Position 12 is a phosphoserine (Ser12). 2 coiled-coil regions span residues Lys18 to Gln79 and Ile328 to Glu356. A Helicase ATP-binding 1 domain is found at Glu486–Leu669. ATP is bound at residue Ala499–Thr506. At Lys572 the chain carries N6-acetyllysine. A DEVH box motif is present at residues Asp611 to His614. The Helicase C-terminal 1 domain maps to Thr728–Val914. Residues Ser978 to Phe1287 enclose the SEC63 1 domain. One can recognise a Helicase ATP-binding 2 domain in the interval His1336–Phe1511. Position 1349–1356 (Ala1349–Thr1356) interacts with ATP. Residues Asp1453–His1456 carry the DEIH box motif. In terms of domain architecture, Helicase C-terminal 2 spans Pro1544–Ile1739. The region spanning Pro1812 to Tyr2176 is the SEC63 2 domain. Ser2195 carries the post-translational modification Phosphoserine.

It belongs to the helicase family. As to quaternary structure, identified in the ASCC complex that contains ASCC1, ASCC2 and ASCC3. Functions as scaffolding subunit that interacts directly with both ASCC1 and ASCC2. Interacts directly with ALKBH3, and thereby recruits ALKBH3 to the ASCC complex. Part of the ASC-1/TRIP4 complex, that contains TRIP4, ASCC1, ASCC2 and ASCC3. Part of the RQT (ribosome quality control trigger) complex, that contains ASCC2, ASCC3 and TRIP4. Associates with ribosomes; recruited to collided ribosomes. Interacts with ZCCHC4. Interacts with ZNF598. Interacts with RPS3. As to expression, ubiquitous.

The protein localises to the nucleus. It localises to the nucleus speckle. The protein resides in the cytoplasm. Its subcellular location is the cytosol. It carries out the reaction Couples ATP hydrolysis with the unwinding of duplex DNA by translocating in the 3'-5' direction.. The catalysed reaction is ATP + H2O = ADP + phosphate + H(+). In terms of biological role, ATPase involved both in DNA repair and rescue of stalled ribosomes. 3'-5' DNA helicase involved in repair of alkylated DNA: promotes DNA unwinding to generate single-stranded substrate needed for ALKBH3, enabling ALKBH3 to process alkylated N3-methylcytosine (3mC) within double-stranded regions. Also involved in activation of the ribosome quality control (RQC) pathway, a pathway that degrades nascent peptide chains during problematic translation. Drives the splitting of stalled ribosomes that are ubiquitinated in a ZNF598-dependent manner, as part of the ribosome quality control trigger (RQT) complex. Part of the ASC-1 complex that enhances NF-kappa-B, SRF and AP1 transactivation. The polypeptide is Activating signal cointegrator 1 complex subunit 3 (ASCC3) (Homo sapiens (Human)).